A 484-amino-acid polypeptide reads, in one-letter code: Probable cytochrome P450 508A1 (484 aa).

Residues 1 to 21 form a helical membrane-spanning segment; it reads MALFEIIISLFVVYIIHNAIS. A heme-binding site is contributed by C428.

It belongs to the cytochrome P450 family. Heme is required as a cofactor.

It is found in the membrane. The chain is Probable cytochrome P450 508A1 (cyp508A1-1) from Dictyostelium discoideum (Social amoeba).